Reading from the N-terminus, the 184-residue chain is MSMKGKETMSEQNERIVMGKLGSTYGIRGWLKVFSYTDNAESIFDYSPWYLKLKGEWVEYKVESWKRHGQGYVCKLAGLDVREDAQLMTNFEIAIDPASLPELSEDEFYWRELFGMQVFTTKGYNLGEVTDLLETGSNDVLVIKANLKDAFGQKERLIPYLEEQVIKKVDREARRIEVDWDPGF.

The PRC barrel domain occupies 104-184; sequence SEDEFYWREL…RIEVDWDPGF (81 aa).

The protein belongs to the RimM family. As to quaternary structure, binds ribosomal protein uS19.

The protein localises to the cytoplasm. In terms of biological role, an accessory protein needed during the final step in the assembly of 30S ribosomal subunit, possibly for assembly of the head region. Essential for efficient processing of 16S rRNA. May be needed both before and after RbfA during the maturation of 16S rRNA. It has affinity for free ribosomal 30S subunits but not for 70S ribosomes. The chain is Ribosome maturation factor RimM from Vibrio atlanticus (strain LGP32) (Vibrio splendidus (strain Mel32)).